The primary structure comprises 617 residues: Probable Xaa-Pro aminopeptidase P (617 aa).

4 residues coordinate Mn(2+): Asp-414, Asp-425, Glu-523, and Glu-537.

This sequence belongs to the peptidase M24B family. The cofactor is Mn(2+).

It carries out the reaction Release of any N-terminal amino acid, including proline, that is linked to proline, even from a dipeptide or tripeptide.. Catalyzes the removal of a penultimate prolyl residue from the N-termini of peptides. This is Probable Xaa-Pro aminopeptidase P (AMPP) from Ajellomyces capsulatus (strain NAm1 / WU24) (Darling's disease fungus).